Here is a 446-residue protein sequence, read N- to C-terminus: Adenylosuccinate synthetase (446 aa).

GTP contacts are provided by residues 20-26 (GDEGKGK) and 48-50 (GHT). Asp-21 (proton acceptor) is an active-site residue. Positions 21 and 48 each coordinate Mg(2+). IMP contacts are provided by residues 21–24 (DEGK), 46–49 (NAGH), Thr-137, Arg-151, Gln-232, Thr-247, and Arg-319. His-49 acts as the Proton donor in catalysis. 315–321 (SVTGRPR) contributes to the substrate binding site. Residues Arg-321, 347–349 (KLD), and 429–431 (STG) each bind GTP.

This sequence belongs to the adenylosuccinate synthetase family. As to quaternary structure, homodimer. Requires Mg(2+) as cofactor.

It is found in the cytoplasm. The catalysed reaction is IMP + L-aspartate + GTP = N(6)-(1,2-dicarboxyethyl)-AMP + GDP + phosphate + 2 H(+). It functions in the pathway purine metabolism; AMP biosynthesis via de novo pathway; AMP from IMP: step 1/2. Its function is as follows. Plays an important role in the de novo pathway of purine nucleotide biosynthesis. Catalyzes the first committed step in the biosynthesis of AMP from IMP. The protein is Adenylosuccinate synthetase of Polynucleobacter necessarius subsp. necessarius (strain STIR1).